Reading from the N-terminus, the 192-residue chain is N-terminal acetyltransferase A complex catalytic subunit NAA10 (192 aa).

An N-acetyltransferase domain is found at 2 to 152; that stretch reads VCIRRATVDD…DAYDMRKNLK (151 aa).

It belongs to the acetyltransferase family. ARD1 subfamily. Part of the NatA complex. Interacts with NAA15. Expressed in leaves, roots, shoots and flowers.

It carries out the reaction N-terminal glycyl-[protein] + acetyl-CoA = N-terminal N(alpha)-acetylglycyl-[protein] + CoA + H(+). The catalysed reaction is N-terminal L-alanyl-[protein] + acetyl-CoA = N-terminal N(alpha)-acetyl-L-alanyl-[protein] + CoA + H(+). It catalyses the reaction N-terminal L-seryl-[protein] + acetyl-CoA = N-terminal N(alpha)-acetyl-L-seryl-[protein] + CoA + H(+). The enzyme catalyses N-terminal L-valyl-[protein] + acetyl-CoA = N-terminal N(alpha)-acetyl-L-valyl-[protein] + CoA + H(+). It carries out the reaction N-terminal L-cysteinyl-[protein] + acetyl-CoA = N-terminal N(alpha)-acetyl-L-cysteinyl-[protein] + CoA + H(+). The catalysed reaction is N-terminal L-threonyl-[protein] + acetyl-CoA = N-terminal N(alpha)-acetyl-L-threonyl-[protein] + CoA + H(+). Its function is as follows. Catalytic subunit of the NatA N-alpha-acetyltransferase complex. Required for male gametocyte development, embryogenesis, suspensor development and the formation of the quiescent center (QC) in the root meristem. Involved in plant immunity through the regulation of SNC1 and RPM1 stability. This Arabidopsis thaliana (Mouse-ear cress) protein is N-terminal acetyltransferase A complex catalytic subunit NAA10.